The primary structure comprises 420 residues: Tryptophan--tRNA ligase (420 aa).

The short motif at 72-80 is the 'HIGH' region element; the sequence is PSGLPHFGH. Residues 308 to 312 carry the 'KMSKS' region motif; it reads KMSSS.

This sequence belongs to the class-I aminoacyl-tRNA synthetase family.

It localises to the cytoplasm. The catalysed reaction is tRNA(Trp) + L-tryptophan + ATP = L-tryptophyl-tRNA(Trp) + AMP + diphosphate + H(+). The sequence is that of Tryptophan--tRNA ligase from Archaeoglobus fulgidus (strain ATCC 49558 / DSM 4304 / JCM 9628 / NBRC 100126 / VC-16).